The sequence spans 442 residues: ATP-dependent RNA helicase SUB2 (442 aa).

The Q motif motif lies at 59–87 (TGFRDFLLKGELLRAITDCGFEHPSEVQQ). The region spanning 90–265 (IPTAILNVDV…KKFMRNPLEV (176 aa)) is the Helicase ATP-binding domain. 103 to 110 (AKSGLGKT) contributes to the ATP binding site. A DECD box motif is present at residues 212 to 215 (DECD). The region spanning 293 to 438 (KLNELLDSLE…EYPQGGVDSS (146 aa)) is the Helicase C-terminal domain.

This sequence belongs to the DEAD box helicase family. DECD subfamily.

Its subcellular location is the nucleus. It catalyses the reaction ATP + H2O = ADP + phosphate + H(+). In terms of biological role, ATP-binding RNA helicase involved in transcription elongation and required for the export of mRNA out of the nucleus. SUB2 also plays a role in pre-mRNA splicing and spliceosome assembly. May be involved in rDNA and telomeric silencing, and maintenance of genome integrity. The sequence is that of ATP-dependent RNA helicase SUB2 (SUB2) from Ajellomyces capsulatus (strain NAm1 / WU24) (Darling's disease fungus).